The sequence spans 340 residues: Guanine nucleotide-binding protein G(I)/G(S)/G(T) subunit beta-1 (340 aa).

7 WD repeats span residues 53-83 (GHLAKIYAMHWGSDSRNLVSASQDGKLIVWD), 95-125 (LRSSWVMTCAYAPSGSYVACGGLDNICSIYS), 141-170 (GHTGYLSCCRFVDDNQIVTSSGDMTCALWD), 182-212 (GHTGDVMSLSLSPNMRTFTSGACDASAKLWD), 224-254 (GHESDINAVTFFPNGHAFATGSDDATCRLFD), 268-298 (NIICGITSVAFSKSGKLLLAGYDDFNCNVWD), and 310-340 (GHDNRVSCLGVTEDGMAVATGSWDSFLKIWN).

Belongs to the WD repeat G protein beta family. As to quaternary structure, g proteins are composed of 3 units, alpha, beta and gamma.

In terms of biological role, guanine nucleotide-binding proteins (G proteins) are involved as a modulator or transducer in various transmembrane signaling systems. The beta and gamma chains are required for the GTPase activity, for replacement of GDP by GTP, and for G protein-effector interaction. The polypeptide is Guanine nucleotide-binding protein G(I)/G(S)/G(T) subunit beta-1 (GBETA1) (Homarus americanus (American lobster)).